A 561-amino-acid polypeptide reads, in one-letter code: Oligo-1,6-glucosidase 1 (561 aa).

Residues D20, N22, D24, F26, and D28 each coordinate Ca(2+). D199 functions as the Nucleophile in the catalytic mechanism. The Proton donor role is filled by E255.

This sequence belongs to the glycosyl hydrolase 13 family.

It is found in the cytoplasm. The enzyme catalyses Hydrolysis of (1-&gt;6)-alpha-D-glucosidic linkages in some oligosaccharides produced from starch and glycogen by alpha-amylase, and in isomaltose.. Functionally, hydrolyzes various disaccharides such as sucrose, maltose, and isomaltose with different efficiencies. Also hydrolyzes longer maltodextrins from maltotriose up to maltohexaose, but not maltoheptaose, palatinose, isomaltotriose, or isomaltotetraose. This is Oligo-1,6-glucosidase 1 (malL) from Bacillus subtilis (strain 168).